We begin with the raw amino-acid sequence, 389 residues long: Ethanolamine-phosphate cytidylyltransferase (389 aa).

Residues 1–20 (MIRNGRGAAGGAEQPGPGGR) are disordered. CTP contacts are provided by residues 221–222 (AF), 229–232 (HVDF), Lys259, 307–310 (HGKT), and 336–340 (SGSNL). Residue Ser338 is modified to Phosphoserine. Thr341 and Thr342 each carry phosphothreonine.

This sequence belongs to the cytidylyltransferase family. As to expression, strongest expression in liver, heart, and skeletal muscle.

The enzyme catalyses phosphoethanolamine + CTP + H(+) = CDP-ethanolamine + diphosphate. It functions in the pathway phospholipid metabolism; phosphatidylethanolamine biosynthesis; phosphatidylethanolamine from ethanolamine: step 2/3. Ethanolamine-phosphate cytidylyltransferase that catalyzes the second step in the synthesis of phosphatidylethanolamine (PE) from ethanolamine via the CDP-ethanolamine pathway. Phosphatidylethanolamine is a dominant inner-leaflet phospholipid in cell membranes, where it plays a role in membrane function by structurally stabilizing membrane-anchored proteins, and participates in important cellular processes such as cell division, cell fusion, blood coagulation, and apoptosis. The protein is Ethanolamine-phosphate cytidylyltransferase (PCYT2) of Homo sapiens (Human).